A 231-amino-acid polypeptide reads, in one-letter code: Flagellar L-ring protein (231 aa).

The N-terminal stretch at 1–18 (MNRLLSVFALGGAVLLAG) is a signal peptide. The N-palmitoyl cysteine moiety is linked to residue Cys19. Cys19 carries the S-diacylglycerol cysteine lipid modification.

It belongs to the FlgH family. The basal body constitutes a major portion of the flagellar organelle and consists of four rings (L,P,S, and M) mounted on a central rod.

Its subcellular location is the cell outer membrane. The protein resides in the bacterial flagellum basal body. Assembles around the rod to form the L-ring and probably protects the motor/basal body from shearing forces during rotation. This is Flagellar L-ring protein from Pseudomonas putida (strain GB-1).